The primary structure comprises 589 residues: MSLRFNLIVTPFSNHRIRNRRETFPAQEFPVATSKSAVKVKCNLITSTDLVGKVREKINGKVDNSLEVPAIHPVDIPSNLCMIDTLERLGVDRYFQSEIDGVLEETYRLWQQKEKDIFADVTCRAMAFRLLRVKGYEVSSDELAPYADQAHVNLQISDVTAVIELYRASQERIYEEESTLEKLHAWTSTYLKQQLVSGTISDKKLHKQVEYYLKNYHGILDLVGIRRSLDLYDIDHYQILKAADRFRTICKDLLAFSRQDFNNCQAQYQRELQLLQRWYEDCRLDKLNYGRDVLRISYFVSSAIIGDPELSDARLAFAKYCVLTTCIDDFFDHAGSREESYRILELVKEWKEKPAEDYGSKEVEFLFTAVYNTVNELAEMAYVEQGRCVKSLLIKLWVELLTSFKKELDSWTDDTALSLDEYLSSSWVSITSRINILTSIQFLGLKLSEEMLSSQECTDLCRHGSLVVRLLNDMQTFEKERRENTKNSVSILLEAPKHEGAITEEEVISKIKEIVEQNRRKLMQMVYQRGTIFPRKCKDVFLKSCRGGYYLYSNGDEFTSPVQIMEDMKLCYEPLTFHPLEANNGGNKN.

The Mg(2+) site is built by Asp328, Asp332, Asn472, Thr476, and Glu480. The short motif at 328 to 332 (DDFFD) is the DDXXD motif element.

Belongs to the terpene synthase family. Mg(2+) is required as a cofactor. As to expression, mostly expressed in trichomes of leaves and fruits.

Its subcellular location is the plastid. The protein localises to the chloroplast. The enzyme catalyses 9alpha-copalyl diphosphate + H2O = (13S)-vitexifolin A + diphosphate. It carries out the reaction peregrinol diphosphate = (13R)-9,13-epoxylabd-14-ene + diphosphate. It catalyses the reaction peregrinol diphosphate + H2O = viteagnusin D + diphosphate. The protein operates within secondary metabolite biosynthesis; terpenoid biosynthesis. Involved in the biosynthesis of labdane-type diterpenoid including cleroda-dienols, and peregrinol lactones and furan derivatives, dopaminergic diterpenoids that can bind to dopamine receptors in the human pituitary gland, have probably ability to lower prolactin levels, and are used to treat menstrual cycle disorders (e.g. premenstrual syndrome and mastodynia). Terpene synthase the catalyzes the conversion of peregrinol diphosphate to viteagnusin D and 9,13(R)-epoxy-labd-14-ene, and of syn-copalyl diphosophate to vitexifolin A. This is Class I diterpene synthase 2, chloroplastic from Vitex agnus-castus (Chaste tree).